The sequence spans 431 residues: MPQLTRSAELFEKAKQFIPGGVNSPVRAFKSVGGTPIFMAKGQGAYMTDVDGNTYLDYVGSWGPFILGSMHPRITAAIENTLTKIGTSFGTPIEMEIEIAELLTQIVPSIEMVRMVNSGTEATMSAVRLARGYTGRDKIIKFEGCYHGHGDSFLIKAGSGALTLGAPDSPGVTKGTANDTLNAKYNDIESVRVLVKENKDSIAAIIIEPVAGNTGVIPAKTDFLQALRDLCTEEGIVLIFDEVMCGFRVALGGAQERYGITPDLTTMGKIIGGGLPVGAFGGKREIMQRVAPIGDVYQAGTLSGNPLALTAGLETLKILRDDNPYPELERKAAFLEEGFRDNMNKLGLSYVQNRVGSMACLFFTETPVENYDTAITCDLKKYGKYYHSMLDQGIYLAPSQFEAMFTSAVMTDEDLEKTVKANYVALQAAEA.

An N6-(pyridoxal phosphate)lysine modification is found at K269.

It belongs to the class-III pyridoxal-phosphate-dependent aminotransferase family. HemL subfamily. In terms of assembly, homodimer. Pyridoxal 5'-phosphate is required as a cofactor.

It is found in the cytoplasm. The enzyme catalyses (S)-4-amino-5-oxopentanoate = 5-aminolevulinate. It functions in the pathway porphyrin-containing compound metabolism; protoporphyrin-IX biosynthesis; 5-aminolevulinate from L-glutamyl-tRNA(Glu): step 2/2. It participates in porphyrin-containing compound metabolism; chlorophyll biosynthesis. The protein is Glutamate-1-semialdehyde 2,1-aminomutase of Chlorobium phaeobacteroides (strain BS1).